The sequence spans 453 residues: Na(+)/H(+) antiporter NhaA (453 aa).

12 helical membrane-spanning segments follow: residues 27 to 47, 78 to 98, 114 to 134, 143 to 163, 172 to 192, 201 to 221, 222 to 242, 249 to 269, 316 to 336, 346 to 366, 385 to 405, and 421 to 441; these read FLHI…AALM, LHFW…GMEI, ILPI…YFSF, GWAV…ALLG, IILL…IAFF, GLVI…IGFA, SAWL…VTGI, VILG…PLTI, PWVA…VSFA, FLIV…GIIT, WAGI…SIFV, and IGVL…GLIY.

The protein belongs to the NhaA Na(+)/H(+) (TC 2.A.33) antiporter family.

The protein localises to the cell inner membrane. The catalysed reaction is Na(+)(in) + 2 H(+)(out) = Na(+)(out) + 2 H(+)(in). Na(+)/H(+) antiporter that extrudes sodium in exchange for external protons. The chain is Na(+)/H(+) antiporter NhaA from Bartonella henselae (strain ATCC 49882 / DSM 28221 / CCUG 30454 / Houston 1) (Rochalimaea henselae).